Reading from the N-terminus, the 141-residue chain is Large ribosomal subunit protein uL11 (141 aa).

The protein belongs to the universal ribosomal protein uL11 family. As to quaternary structure, part of the ribosomal stalk of the 50S ribosomal subunit. Interacts with L10 and the large rRNA to form the base of the stalk. L10 forms an elongated spine to which L12 dimers bind in a sequential fashion forming a multimeric L10(L12)X complex. In terms of processing, one or more lysine residues are methylated.

Functionally, forms part of the ribosomal stalk which helps the ribosome interact with GTP-bound translation factors. This Lactobacillus johnsonii (strain CNCM I-12250 / La1 / NCC 533) protein is Large ribosomal subunit protein uL11.